The sequence spans 95 residues: Aspartyl/glutamyl-tRNA(Asn/Gln) amidotransferase subunit C (95 aa).

It belongs to the GatC family. As to quaternary structure, heterotrimer of A, B and C subunits.

The catalysed reaction is L-glutamyl-tRNA(Gln) + L-glutamine + ATP + H2O = L-glutaminyl-tRNA(Gln) + L-glutamate + ADP + phosphate + H(+). It carries out the reaction L-aspartyl-tRNA(Asn) + L-glutamine + ATP + H2O = L-asparaginyl-tRNA(Asn) + L-glutamate + ADP + phosphate + 2 H(+). Functionally, allows the formation of correctly charged Asn-tRNA(Asn) or Gln-tRNA(Gln) through the transamidation of misacylated Asp-tRNA(Asn) or Glu-tRNA(Gln) in organisms which lack either or both of asparaginyl-tRNA or glutaminyl-tRNA synthetases. The reaction takes place in the presence of glutamine and ATP through an activated phospho-Asp-tRNA(Asn) or phospho-Glu-tRNA(Gln). This chain is Aspartyl/glutamyl-tRNA(Asn/Gln) amidotransferase subunit C, found in Pseudomonas paraeruginosa (strain DSM 24068 / PA7) (Pseudomonas aeruginosa (strain PA7)).